The chain runs to 267 residues: 4-diphosphocytidyl-2-C-methyl-D-erythritol kinase (267 aa).

The active site involves lysine 8. 90–100 serves as a coordination point for ATP; it reads PIGAGLGGGSS. The active site involves aspartate 132.

Belongs to the GHMP kinase family. IspE subfamily.

It catalyses the reaction 4-CDP-2-C-methyl-D-erythritol + ATP = 4-CDP-2-C-methyl-D-erythritol 2-phosphate + ADP + H(+). Its pathway is isoprenoid biosynthesis; isopentenyl diphosphate biosynthesis via DXP pathway; isopentenyl diphosphate from 1-deoxy-D-xylulose 5-phosphate: step 3/6. Its function is as follows. Catalyzes the phosphorylation of the position 2 hydroxy group of 4-diphosphocytidyl-2C-methyl-D-erythritol. In Azobacteroides pseudotrichonymphae genomovar. CFP2, this protein is 4-diphosphocytidyl-2-C-methyl-D-erythritol kinase.